Here is a 484-residue protein sequence, read N- to C-terminus: Acetaldehyde dehydrogenase (acetylating) (484 aa).

The protein belongs to the aldehyde dehydrogenase family.

The catalysed reaction is acetaldehyde + NAD(+) + CoA = acetyl-CoA + NADH + H(+). The protein operates within organosulfur degradation; alkanesulfonate degradation. In terms of biological role, involved in an anaerobic respiration pathway that converts the sulfonate taurine (2-aminoethanesulfonate) to ammonia, acetate and sulfide. Catalyzes the oxidation of acetaldehyde to acetyl-CoA in the presence of CoASH and NAD(+). Highly prefers NAD(+) over NADP(+). The protein is Acetaldehyde dehydrogenase (acetylating) of Bilophila wadsworthia (strain 3_1_6).